Reading from the N-terminus, the 442-residue chain is Histidinol dehydrogenase (442 aa).

The NAD(+) site is built by Tyr136, Gln197, and Asn220. Ser243, Gln265, and His268 together coordinate substrate. Positions 265 and 268 each coordinate Zn(2+). Catalysis depends on proton acceptor residues Glu333 and His334. His334, Asp367, Glu421, and His426 together coordinate substrate. Asp367 contributes to the Zn(2+) binding site. Zn(2+) is bound at residue His426.

It belongs to the histidinol dehydrogenase family. Zn(2+) is required as a cofactor.

The enzyme catalyses L-histidinol + 2 NAD(+) + H2O = L-histidine + 2 NADH + 3 H(+). It participates in amino-acid biosynthesis; L-histidine biosynthesis; L-histidine from 5-phospho-alpha-D-ribose 1-diphosphate: step 9/9. Its function is as follows. Catalyzes the sequential NAD-dependent oxidations of L-histidinol to L-histidinaldehyde and then to L-histidine. The polypeptide is Histidinol dehydrogenase (Pseudomonas fluorescens (strain ATCC BAA-477 / NRRL B-23932 / Pf-5)).